The chain runs to 361 residues: 3-dehydroquinate synthase (361 aa).

NAD(+) is bound by residues 72–77 (SGEKEK), 130–131 (TT), Lys142, and Lys151. The Zn(2+) site is built by Glu184, His247, and His264.

It belongs to the sugar phosphate cyclases superfamily. Dehydroquinate synthase family. Requires NAD(+) as cofactor. Co(2+) serves as cofactor. Zn(2+) is required as a cofactor.

It is found in the cytoplasm. It carries out the reaction 7-phospho-2-dehydro-3-deoxy-D-arabino-heptonate = 3-dehydroquinate + phosphate. It participates in metabolic intermediate biosynthesis; chorismate biosynthesis; chorismate from D-erythrose 4-phosphate and phosphoenolpyruvate: step 2/7. Its function is as follows. Catalyzes the conversion of 3-deoxy-D-arabino-heptulosonate 7-phosphate (DAHP) to dehydroquinate (DHQ). The polypeptide is 3-dehydroquinate synthase (Bacillus cereus (strain ATCC 14579 / DSM 31 / CCUG 7414 / JCM 2152 / NBRC 15305 / NCIMB 9373 / NCTC 2599 / NRRL B-3711)).